A 151-amino-acid polypeptide reads, in one-letter code: Cytochrome c-type biogenesis protein CcmE (151 aa).

Residues 1-8 lie on the Cytoplasmic side of the membrane; it reads MNPLRRKR. Residues 9 to 29 traverse the membrane as a helical; Signal-anchor for type II membrane protein segment; that stretch reads LLIILAILVGVGIAVGLALSA. The Periplasmic portion of the chain corresponds to 30–151; it reads LQQNINLFYT…QSAPTPAKEG (122 aa). Positions 124 and 128 each coordinate heme.

Belongs to the CcmE/CycJ family.

The protein resides in the cell inner membrane. In terms of biological role, heme chaperone required for the biogenesis of c-type cytochromes. Transiently binds heme delivered by CcmC and transfers the heme to apo-cytochromes in a process facilitated by CcmF and CcmH. This is Cytochrome c-type biogenesis protein CcmE from Pseudomonas fluorescens (strain SBW25).